We begin with the raw amino-acid sequence, 264 residues long: S-adenosylmethionine decarboxylase proenzyme (264 aa).

Catalysis depends on serine 112, which acts as the Schiff-base intermediate with substrate; via pyruvic acid. The residue at position 112 (serine 112) is a Pyruvic acid (Ser); by autocatalysis. Residue histidine 117 is the Proton acceptor; for processing activity of the active site. The Proton donor; for catalytic activity role is filled by cysteine 140.

This sequence belongs to the prokaryotic AdoMetDC family. Type 2 subfamily. Heterooctamer of four alpha and four beta chains arranged as a tetramer of alpha/beta heterodimers. It depends on pyruvate as a cofactor. Is synthesized initially as an inactive proenzyme. Formation of the active enzyme involves a self-maturation process in which the active site pyruvoyl group is generated from an internal serine residue via an autocatalytic post-translational modification. Two non-identical subunits are generated from the proenzyme in this reaction, and the pyruvate is formed at the N-terminus of the alpha chain, which is derived from the carboxyl end of the proenzyme. The post-translation cleavage follows an unusual pathway, termed non-hydrolytic serinolysis, in which the side chain hydroxyl group of the serine supplies its oxygen atom to form the C-terminus of the beta chain, while the remainder of the serine residue undergoes an oxidative deamination to produce ammonia and the pyruvoyl group blocking the N-terminus of the alpha chain.

The catalysed reaction is S-adenosyl-L-methionine + H(+) = S-adenosyl 3-(methylsulfanyl)propylamine + CO2. It participates in amine and polyamine biosynthesis; S-adenosylmethioninamine biosynthesis; S-adenosylmethioninamine from S-adenosyl-L-methionine: step 1/1. In terms of biological role, catalyzes the decarboxylation of S-adenosylmethionine to S-adenosylmethioninamine (dcAdoMet), the propylamine donor required for the synthesis of the polyamines spermine and spermidine from the diamine putrescine. The protein is S-adenosylmethionine decarboxylase proenzyme of Sodalis glossinidius (strain morsitans).